We begin with the raw amino-acid sequence, 444 residues long: Biotin carboxylase 2 (444 aa).

The Biotin carboxylation domain occupies 1–444; sequence MFTKVLIANR…VTTDFLKQHL (444 aa). ATP contacts are provided by residues lysine 116, lysine 158, 164-165, 200-203, histidine 208, and histidine 235; these read GG and EKVI. Positions 120–317 constitute an ATP-grasp domain; it reads RKAMEAAGVP…LVEQQLRIAA (198 aa). Lysine 237 contributes to the hydrogencarbonate binding site. Residues glutamate 275 and glutamate 288 each coordinate ATP. Glutamate 275, glutamate 288, and asparagine 290 together coordinate Mg(2+). Mn(2+)-binding residues include glutamate 275, glutamate 288, and asparagine 290. Positions 292, 295, and 338 each coordinate hydrogencarbonate. Residue arginine 292 is part of the active site. Residue arginine 338 coordinates biotin.

As to quaternary structure, acetyl-CoA carboxylase is a heterohexamer of biotin carboxyl carrier protein, biotin carboxylase and the two subunits of carboxyl transferase in a 2:2 complex. Requires Mg(2+) as cofactor. The cofactor is Mn(2+).

It carries out the reaction N(6)-biotinyl-L-lysyl-[protein] + hydrogencarbonate + ATP = N(6)-carboxybiotinyl-L-lysyl-[protein] + ADP + phosphate + H(+). It participates in lipid metabolism; malonyl-CoA biosynthesis; malonyl-CoA from acetyl-CoA: step 1/1. Functionally, this protein is a component of the acetyl coenzyme A carboxylase complex; first, biotin carboxylase catalyzes the carboxylation of the carrier protein and then the transcarboxylase transfers the carboxyl group to form malonyl-CoA. The sequence is that of Biotin carboxylase 2 (accC2) from Bacillus subtilis (strain 168).